The chain runs to 137 residues: Venom allergen 4 (137 aa).

Residues 1 to 19 (MKTFVLVSCLLVFTQIIYA) form the signal peptide.

The protein belongs to the ant venom allergen 2/4 family. As to quaternary structure, monomer. Expressed by the venom gland.

It is found in the secreted. The sequence is that of Venom allergen 4 from Solenopsis invicta (Red imported fire ant).